The chain runs to 1260 residues: Neural cell adhesion molecule L1 (1260 aa).

The first 19 residues, Met1 to Leu19, serve as a signal peptide directing secretion. The Extracellular portion of the chain corresponds to Ile20–Glu1123. 6 Ig-like C2-type domains span residues Pro35–Val130, Pro138–Asp225, Pro239–Thr327, Pro332–Tyr419, Pro424–Thr506, and Thr517–Glu600. 2 disulfides stabilise this stretch: Cys57–Cys113 and Cys157–Cys208. N-linked (GlcNAc...) asparagine glycosylation is found at Asn100, Asn202, Asn246, and Asn293. Intrachain disulfides connect Cys263–Cys311 and Cys353–Cys403. Asn432, Asn478, Asn489, and Asn504 each carry an N-linked (GlcNAc...) asparagine glycan. Cys447 and Cys496 are disulfide-bonded. Residues Cys538 and Cys590 are joined by a disulfide bond. 2 consecutive short sequence motifs (cell attachment site) follow at residues Arg553–Asp555 and Arg562–Asp564. Asn587 and Asn670 each carry an N-linked (GlcNAc...) asparagine glycan. 5 Fibronectin type-III domains span residues Pro613–Ala711, Asn716–Asp809, Pro811–Val916, His919–Phe1015, and Leu1014–Val1112. Positions Gly697–Gly724 are disordered. A compositionally biased stretch (basic and acidic residues) spans Ala712 to Gly724. N-linked (GlcNAc...) asparagine glycosylation is found at Asn725, Asn776, Asn824, Asn848, Asn875, Asn968, Asn978, Asn1022, Asn1030, Asn1073, and Asn1107. The helical transmembrane segment at Gly1124–Ile1146 threads the bilayer. At Lys1147–Glu1260 the chain is on the cytoplasmic side. 7 positions are modified to phosphoserine: Ser1166, Ser1181, Ser1184, Ser1197, Ser1246, Ser1247, and Ser1251. 2 disordered regions span residues Glu1183 to Ser1210 and Ile1229 to Glu1260. Over residues Asn1244–Ile1253 the composition is skewed to polar residues.

It belongs to the immunoglobulin superfamily. L1/neurofascin/NgCAM family. Interacts with SHTN1; the interaction occurs in axonal growth cones. Interacts with isoform 2 of BSG. As to expression, expressed in the brain, including in the molecular layer of the cerebellar cortex, the fiber-rich layers of the hippocampus (alveus, and strata lacunosum moleculare, radiatum, and oriens), the nerve fiber layer and the inner and outer plexiform layers of the retina, and in the molecular layer of the olfactory bulb (at protein level).

Its subcellular location is the cell membrane. It is found in the cell projection. The protein resides in the growth cone. In terms of biological role, neural cell adhesion molecule involved in the dynamics of cell adhesion and in the generation of transmembrane signals at tyrosine kinase receptors. During brain development, critical in multiple processes, including neuronal migration, axonal growth and fasciculation, and synaptogenesis. In the mature brain, plays a role in the dynamics of neuronal structure and function, including synaptic plasticity. This Mus musculus (Mouse) protein is Neural cell adhesion molecule L1 (L1cam).